The sequence spans 148 residues: Small ribosomal subunit protein eS6 (148 aa).

This sequence belongs to the eukaryotic ribosomal protein eS6 family.

This chain is Small ribosomal subunit protein eS6, found in Pyrobaculum arsenaticum (strain DSM 13514 / JCM 11321 / PZ6).